The chain runs to 170 residues: Peptide deformylase 1 (170 aa).

Fe cation-binding residues include C92 and H135. E136 is a catalytic residue. H139 serves as a coordination point for Fe cation.

This sequence belongs to the polypeptide deformylase family. The cofactor is Fe(2+).

It catalyses the reaction N-terminal N-formyl-L-methionyl-[peptide] + H2O = N-terminal L-methionyl-[peptide] + formate. Its function is as follows. Removes the formyl group from the N-terminal Met of newly synthesized proteins. Requires at least a dipeptide for an efficient rate of reaction. N-terminal L-methionine is a prerequisite for activity but the enzyme has broad specificity at other positions. This is Peptide deformylase 1 from Coxiella burnetii (strain RSA 493 / Nine Mile phase I).